The sequence spans 129 residues: uncharacterized protein (129 aa).

Residues 86–96 (NDGFSSDDEPE) are compositionally biased toward acidic residues. Positions 86-129 (NDGFSSDDEPEEHVILTEDNQGEPSETPQATFDITEFIKTEDED) are disordered. Positions 103–117 (EDNQGEPSETPQATF) are enriched in polar residues.

This sequence belongs to the asfivirus D129L family.

This is an uncharacterized protein from African swine fever virus (isolate Tick/South Africa/Pretoriuskop Pr4/1996) (ASFV).